Reading from the N-terminus, the 1002-residue chain is Protein SMAX1-LIKE 7 (1002 aa).

The region spanning 8–185 is the Clp R domain; sequence ARQCLTEETA…DVLHPPVTSQ (178 aa). Repeat regions lie at residues 12–86 and 103–185; these read LTEE…LDRL and VSNS…VTSQ. The EAR motif lies at 854–858; sequence LDLNL.

The protein belongs to the ClpA/ClpB family. In terms of assembly, interacts with TPL/TPR in an EAR-motif dependent manner. Interacts with TPL, TPR1, TPR2 and TPR4. Interacts with MAX2 and TPR2. Interacts with D14. The interaction with D14 occurs in the presence of (2'R) stereoisomers of strigolactones, but not (2'S) stereoisomers. In terms of processing, ubiquitinated upon strigolactone treatment. Strigolactone, but not karrikin, triggers rapid SCF(MAX2)-dependent degradation. As to expression, expressed in axillary branches and roots. Detected in seedlings and leaves. Expressed in the primary rosette buds and expanding leaves of adult rosettes, the vasculature of the hypocotyls, cotyledons, and mature roots, and in the midvein and petioles of young leaves.

It localises to the nucleus. In terms of biological role, probable component of a transcriptional corepressor complex involved in branching control. Regulates cotyledon expansion and lateral root growth, but not germination or hypocotyl elongation. Promotes auxin transport and PIN1 accumulation in the stem and represses BRC1/TCP18 expression in axillary buds. In Arabidopsis thaliana (Mouse-ear cress), this protein is Protein SMAX1-LIKE 7.